A 109-amino-acid polypeptide reads, in one-letter code: Biphenyl dioxygenase ferredoxin subunit (109 aa).

The Rieske domain maps to 4 to 100 (TKACSVDEVP…IRIEGRDVLV (97 aa)). C43, H45, C63, and H66 together coordinate [2Fe-2S] cluster.

This sequence belongs to the bacterial ring-hydroxylating dioxygenase ferredoxin component family. This dioxygenase system consists of four proteins: the two subunits of the hydroxylase component (BphA1 and BphA2), a ferredoxin (BphA3) and a ferredoxin reductase (BphA4).

In terms of biological role, this protein seems to be a 2Fe-2S ferredoxin. This chain is Biphenyl dioxygenase ferredoxin subunit (bphA3), found in Pseudomonas sp. (strain KKS102).